Consider the following 213-residue polypeptide: Protein PAE0745 (213 aa).

Positions 8–201 constitute an AMMECR1 domain; it reads EEGTFLVRLA…EKSPGGEVYE (194 aa).

The sequence is that of Protein PAE0745 from Pyrobaculum aerophilum (strain ATCC 51768 / DSM 7523 / JCM 9630 / CIP 104966 / NBRC 100827 / IM2).